Consider the following 147-residue polypeptide: Leghemoglobin (147 aa).

The 146-residue stretch at 2–147 folds into the Globin domain; that stretch reads GFTADQEALV…LASAIKKAMS (146 aa). 2 positions are modified to nitrated tyrosine: tyrosine 25 and tyrosine 30. Position 45 (serine 45) interacts with heme b. Residue serine 45 is modified to Phosphoserine. Histidine 62 provides a ligand contact to O2. Lysine 65, histidine 94, and lysine 97 together coordinate heme b. The residue at position 135 (tyrosine 135) is a Nitrated tyrosine.

This sequence belongs to the plant globin family. In terms of assembly, monomer. Nitrated in effective nodules and particularly in hypoxic conditions; this mechanism may play a protective role in the symbiosis by buffering toxic peroxynitrite NO(2)(-). Nitration level decrease during nodule senescence. In terms of processing, phosphorylation at Ser-45 disrupts the molecular environment of its porphyrin ring oxygen binding pocket, thus leading to a reduced oxygen consumption and to the delivery of oxygen O(2) to symbiosomes. As to expression, root nodules.

It localises to the cytoplasm. Its subcellular location is the cytosol. The protein resides in the nucleus. In terms of biological role, leghemoglobin that reversibly binds oxygen O(2) through a pentacoordinated heme iron. In root nodules, facilitates the diffusion of oxygen to the bacteroids while preventing the bacterial nitrogenase from being inactivated by buffering dioxygen, nitric oxide and carbon monoxide, and promoting the formation of reactive oxygen species (ROS, e.g. H(2)O(2)). This role is essential for symbiotic nitrogen fixation (SNF). This is Leghemoglobin (LB3) from Medicago sativa (Alfalfa).